We begin with the raw amino-acid sequence, 253 residues long: Phycoerythrobilin:ferredoxin oxidoreductase (253 aa).

This sequence belongs to the HY2 family.

It carries out the reaction (3Z)-phycoerythrobilin + oxidized 2[4Fe-4S]-[ferredoxin] = 15,16-dihydrobiliverdin + reduced 2[4Fe-4S]-[ferredoxin] + 2 H(+). Its function is as follows. Catalyzes the two-electron reduction of the C2 and C3(1) diene system of 15,16-dihydrobiliverdin. This is Phycoerythrobilin:ferredoxin oxidoreductase from Prochlorococcus marinus (strain AS9601).